The following is a 760-amino-acid chain: Golgin subfamily A member 5 (760 aa).

At 1 to 727 the chain is on the cytoplasmic side; that stretch reads MSWFVDLAGK…IFLRRYPMAR (727 aa). Residues 95–111 show a composition bias toward polar residues; that stretch reads VSSTTPLGSSSKASSNF. Disordered stretches follow at residues 95–114, 126–216, and 432–456; these read VSSTTPLGSSSKASSNFVRP, DFLN…SQAD, and TEEKQRAEDLQQQAKSSRSAAEYTK. Basic and acidic residues predominate over residues 135–146; it reads QSEKKEVRRETV. Residues 148-166 are compositionally biased toward polar residues; that stretch reads KAFSPTGVSAQSQMPTVSL. The segment covering 174–201 has biased composition (low complexity); that stretch reads PSVTPTPSSTQGLSRNSSLGSLSSSSHS. The stretch at 249–668 forms a coiled coil; sequence QGQEHVISNL…LQGGQNSASH (420 aa). Residues 441–450 are compositionally biased toward polar residues; sequence LQQQAKSSRS. The chain crosses the membrane as a helical; Anchor for type IV membrane protein span at residues 728–748; the sequence is VFVIIYMALLHLWVMIVLLTY. Over 749–760 the chain is Extracellular; the sequence is TPEMHHSHPDGR.

Its subcellular location is the golgi apparatus membrane. Involved in maintaining Golgi structure. Stimulates the formation of Golgi stacks and ribbons. Involved in intra-Golgi retrograde transport. The sequence is that of Golgin subfamily A member 5 (golga5) from Danio rerio (Zebrafish).